Consider the following 143-residue polypeptide: Large ribosomal subunit protein uL16 (143 aa).

It belongs to the universal ribosomal protein uL16 family. As to quaternary structure, part of the 50S ribosomal subunit.

Binds 23S rRNA and is also seen to make contacts with the A and possibly P site tRNAs. In Tropheryma whipplei (strain TW08/27) (Whipple's bacillus), this protein is Large ribosomal subunit protein uL16.